Consider the following 188-residue polypeptide: dCTP deaminase (188 aa).

DCTP is bound by residues 111–116 (KSTYAR), 135–137 (TLE), Gln156, Tyr170, and Gln180. The active-site Proton donor/acceptor is Glu137.

The protein belongs to the dCTP deaminase family. Homotrimer.

It carries out the reaction dCTP + H2O + H(+) = dUTP + NH4(+). It functions in the pathway pyrimidine metabolism; dUMP biosynthesis; dUMP from dCTP (dUTP route): step 1/2. In terms of biological role, catalyzes the deamination of dCTP to dUTP. The chain is dCTP deaminase from Methylococcus capsulatus (strain ATCC 33009 / NCIMB 11132 / Bath).